A 369-amino-acid chain; its full sequence is MPNLEKEFHNGVNGLNGNTKIENDGCVNPHSLGIIGGGWYGCHIAATLLALGFRVKLFEQHERLLHEASGNNQFRLHMGFHYARHSGTRLQSRDGFLRFVEHYPELSRIVPYNIYAVPTQDSLLDYNTYKAIMASSGVAFTEGAPDGVHITNVDGIMCVPERVLLLTKARAYFEAALKGALELGRKVSSIQEADDGVLIDGEGFDFVVDATWGHYMDLDLQVIYEATLLLYYEGPPEFPAVTLVDGPLASVYPTEVPGVFTLSSVPHTPLGQFKTAAEARAARDGVSPATISAKRALMEEQIMHYLPTFLETFRYIGPQLAVKTKPLGAYDDRSCRVSRRGRMFSVMSGKIDTIFFAHERILSLIDDES.

Belongs to the aromatic-ring hydroxylase family. It depends on FAD as a cofactor.

Its pathway is secondary metabolite biosynthesis. FAD-dependent monooxygenase; part of the gene cluster that mediates the biosynthesis of the gamma-pyrones fusapyrone (FPY) and deoxyfusapyrone (dFPY). FPY is an undecaketide and thus likely synthesized by the polyketide synthase FPY1 from acetyl-CoA functioning as starter unit and the addition of 10 malonyl-CoA extender units by successive Claisen-condensations. Next to this, FPY shares some rare features: C-glycosylated 4-deoxyglucose at C-3, a gem-dimethyl group at C-13, and an alpha-beta to beta-gamma double bond shift at C-20. During FPY biosynthesis mono-C-methyl groups are transferred to the tetra-, penta-, hexa- and heptaketide, while two C-methyl groups are transferred to the nonaketide, suggesting that the CMet domain is programmed to selectively catalyze two successive C-alpha-methylation reactions of the nonaketide, while other alpha-carbons are non- or mono-methylated only. While the origin of the 4'-deoxyglucose moiety remains opaque, its transfer to C-3 is most likely mediated by the C-glycosyltransferase FPY2. Next to this, the hydroxyl group present at C-33 and discriminating between FPY and dFPY, is likely to be installed by the cytochrome P450 monooxygenase FPY7. No putative function can be predicted for the remaining genes FPY3-FPY6. This Fusarium mangiferae (Mango malformation disease fungus) protein is FAD-dependent monooxygenase FPY4.